The chain runs to 467 residues: Cysteine--tRNA ligase (467 aa).

Residue Cys-27 coordinates Zn(2+). Residues Ala-29–His-39 carry the 'HIGH' region motif. Residues Cys-209, His-234, and Glu-238 each contribute to the Zn(2+) site. Positions Lys-265 to Ser-269 match the 'KMSKS' region motif. Residue Lys-268 participates in ATP binding.

Belongs to the class-I aminoacyl-tRNA synthetase family. Monomer. Zn(2+) serves as cofactor.

The protein resides in the cytoplasm. It catalyses the reaction tRNA(Cys) + L-cysteine + ATP = L-cysteinyl-tRNA(Cys) + AMP + diphosphate. This Mycolicibacterium gilvum (strain PYR-GCK) (Mycobacterium gilvum (strain PYR-GCK)) protein is Cysteine--tRNA ligase.